A 132-amino-acid polypeptide reads, in one-letter code: Large ribosomal subunit protein bL17 (132 aa).

Belongs to the bacterial ribosomal protein bL17 family. As to quaternary structure, part of the 50S ribosomal subunit. Contacts protein L32.

This chain is Large ribosomal subunit protein bL17, found in Anaplasma phagocytophilum (strain HZ).